The primary structure comprises 286 residues: Polyamine aminopropyltransferase (286 aa).

The 234-residue stretch at 5–238 folds into the PABS domain; sequence TMWHETLHDQ…GIMTFAWATD (234 aa). Residue glutamine 33 coordinates S-methyl-5'-thioadenosine. Histidine 64 and aspartate 88 together coordinate spermidine. Residues glutamate 108 and 140–141 each bind S-methyl-5'-thioadenosine; that span reads DG. Aspartate 158 functions as the Proton acceptor in the catalytic mechanism. Residue 158–161 participates in spermidine binding; sequence DCTD. Proline 165 contributes to the S-methyl-5'-thioadenosine binding site.

It belongs to the spermidine/spermine synthase family. As to quaternary structure, homodimer or homotetramer.

The protein localises to the cytoplasm. The catalysed reaction is S-adenosyl 3-(methylsulfanyl)propylamine + putrescine = S-methyl-5'-thioadenosine + spermidine + H(+). Its pathway is amine and polyamine biosynthesis; spermidine biosynthesis; spermidine from putrescine: step 1/1. Functionally, catalyzes the irreversible transfer of a propylamine group from the amino donor S-adenosylmethioninamine (decarboxy-AdoMet) to putrescine (1,4-diaminobutane) to yield spermidine. The sequence is that of Polyamine aminopropyltransferase from Salmonella newport (strain SL254).